We begin with the raw amino-acid sequence, 377 residues long: DAR GTPase 2, mitochondrial (377 aa).

The N-terminal 21 residues, 1–21 (MATAKTWKIAREIGDAVIKAS), are a transit peptide targeting the mitochondrion. The CP-type G domain occupies 34–211 (AAAVRAISER…VLDTPGIFPP (178 aa)). Positions 55-59 (DARIP) match the DARXP motif motif. Residues 82–85 (NKME), 110–111 (NS), 150–155 (NVGKSA), and G207 contribute to the GTP site.

Belongs to the TRAFAC class YlqF/YawG GTPase family. MTG1 subfamily.

It is found in the mitochondrion. In terms of biological role, GTPase that may function in mitochondrial ribosome assembly. The polypeptide is DAR GTPase 2, mitochondrial (Arabidopsis thaliana (Mouse-ear cress)).